A 94-amino-acid polypeptide reads, in one-letter code: Gibberellin-regulated protein 11 (94 aa).

An N-terminal signal peptide occupies residues 1 to 23 (MAVFRVLLASLLISLLVLDFVHA).

Belongs to the GASA family. Post-translationally, six disulfide bonds may be present.

Its subcellular location is the secreted. In terms of biological role, gibberellin-regulated protein that may function in hormonal controlled steps of development such as seed germination, flowering and seed maturation. The sequence is that of Gibberellin-regulated protein 11 (GASA11) from Arabidopsis thaliana (Mouse-ear cress).